Here is a 235-residue protein sequence, read N- to C-terminus: Ubiquinone/menaquinone biosynthesis C-methyltransferase UbiE (235 aa).

T60 and D81 together coordinate S-adenosyl-L-methionine.

The protein belongs to the class I-like SAM-binding methyltransferase superfamily. MenG/UbiE family.

It carries out the reaction a 2-demethylmenaquinol + S-adenosyl-L-methionine = a menaquinol + S-adenosyl-L-homocysteine + H(+). The catalysed reaction is a 2-methoxy-6-(all-trans-polyprenyl)benzene-1,4-diol + S-adenosyl-L-methionine = a 5-methoxy-2-methyl-3-(all-trans-polyprenyl)benzene-1,4-diol + S-adenosyl-L-homocysteine + H(+). It participates in quinol/quinone metabolism; menaquinone biosynthesis; menaquinol from 1,4-dihydroxy-2-naphthoate: step 2/2. The protein operates within cofactor biosynthesis; ubiquinone biosynthesis. Methyltransferase required for the conversion of demethylmenaquinol (DMKH2) to menaquinol (MKH2) and the conversion of 2-polyprenyl-6-methoxy-1,4-benzoquinol (DDMQH2) to 2-polyprenyl-3-methyl-6-methoxy-1,4-benzoquinol (DMQH2). This is Ubiquinone/menaquinone biosynthesis C-methyltransferase UbiE from Geotalea daltonii (strain DSM 22248 / JCM 15807 / FRC-32) (Geobacter daltonii).